A 124-amino-acid chain; its full sequence is Small ribosomal subunit protein uS12 (124 aa).

The residue at position 89 (Asp-89) is a 3-methylthioaspartic acid.

This sequence belongs to the universal ribosomal protein uS12 family. Part of the 30S ribosomal subunit. Contacts proteins S8 and S17. May interact with IF1 in the 30S initiation complex.

In terms of biological role, with S4 and S5 plays an important role in translational accuracy. Functionally, interacts with and stabilizes bases of the 16S rRNA that are involved in tRNA selection in the A site and with the mRNA backbone. Located at the interface of the 30S and 50S subunits, it traverses the body of the 30S subunit contacting proteins on the other side and probably holding the rRNA structure together. The combined cluster of proteins S8, S12 and S17 appears to hold together the shoulder and platform of the 30S subunit. In Aliivibrio fischeri (strain ATCC 700601 / ES114) (Vibrio fischeri), this protein is Small ribosomal subunit protein uS12.